We begin with the raw amino-acid sequence, 57 residues long: Large ribosomal subunit protein bL32c (57 aa).

It belongs to the bacterial ribosomal protein bL32 family.

It localises to the plastid. Its subcellular location is the chloroplast. This is Large ribosomal subunit protein bL32c from Acorus calamus (Sweet flag).